We begin with the raw amino-acid sequence, 300 residues long: Urease accessory protein UreD (300 aa).

It belongs to the UreD family. In terms of assembly, ureD, UreF and UreG form a complex that acts as a GTP-hydrolysis-dependent molecular chaperone, activating the urease apoprotein by helping to assemble the nickel containing metallocenter of UreC. The UreE protein probably delivers the nickel.

The protein resides in the cytoplasm. In terms of biological role, required for maturation of urease via the functional incorporation of the urease nickel metallocenter. This is Urease accessory protein UreD from Prochlorococcus marinus (strain MIT 9215).